Reading from the N-terminus, the 525-residue chain is MSSFSTHNFVAIATFVCWFCCLATAAPLTSKAAYLLKRNSLIEEDASRKLGAKIVLTNEEKVLDDFILAEKRKLIDDSRLNQTEYMPAASFYRSKDFIDTTFAYKIIQDMPKGGALHLHDLAIASLDWVVKNATYRDNVYMCMDKDNDVNLRVLQLIPPDPFCVWKLVATERANSGDVEAFDDWLKKNISYLSTDPVTQYATVDSVWVRFNKYFAQVIGLLFYAPIMRDYYRQALEEFRADNVQYIELRSQLFGFFELDGTVHDAEFGLNLYKSVTEEFQREYPDFIGAKIILSGLRFKSQEEILNEVKIAMDLHKKYPDFFLGYDLVGQEDPNFSLLHYLDALLYPSIQNPPYRLPYFFHAAETNWQETEVDYNLADALLLNTTRVGHGFALIKHPRFTELAKENGVAVEVNPISNQILGLVRDVRNHALVPLIADDYPIVISSDDPGAWEASPLSHDFYVALMDLCGRDTALTFLKQLALNSIRYSAMSDTEKVAAKAKWTTQWDKFVKTSVEGLKPHINDRS.

The N-terminal stretch at Met1–Ala25 is a signal peptide. N-linked (GlcNAc...) asparagine glycosylation occurs at Asn81. 2 residues coordinate Zn(2+): His117 and His119. Residue Asp120 participates in substrate binding. N-linked (GlcNAc...) asparagine glycosylation is present at Asn132. Cys142 and Cys163 form a disulfide bridge. Asn188 carries an N-linked (GlcNAc...) asparagine glycan. Substrate is bound by residues Trp207–Phe214 and Gly329. Residue Asn334 is glycosylated (N-linked (GlcNAc...) asparagine). His361 provides a ligand contact to Zn(2+). The active-site Proton donor is the Glu364. Catalysis depends on His389, which acts as the Proton acceptor. Asp446 provides a ligand contact to Zn(2+). Asp447 serves as a coordination point for substrate.

Belongs to the metallo-dependent hydrolases superfamily. Adenosine and AMP deaminases family. ADGF subfamily. Zn(2+) serves as cofactor. In terms of tissue distribution, detected in egg cordons and in the developing central nervous system. Not detected in adult central nervous system (at protein level). Atrial gland.

The protein resides in the secreted. It carries out the reaction adenosine + H2O + H(+) = inosine + NH4(+). In terms of biological role, adenosine deaminase that may contribute to the degradation of extracellular adenosine, a signaling molecule that controls a variety of cellular responses. May play a role in the regulation of cell proliferation. This Aplysia californica (California sea hare) protein is Adenosine deaminase AGSA.